Here is a 272-residue protein sequence, read N- to C-terminus: MKRSAFFISDGTGITAETLGQSLLAQFENITFAKFTRPYIDSVDKARAMVQQINLAAEKDGFRPIIFDTIVNQDIREILATSNGFMIDIFSTFLAPLEQELSEHSSYSVGKSHSIGHNSNYMERIEAVNFALDNDDGARTHYYDKADLILVGVSRCGKTPTCLYMAMQFGIRAANYPLTEDDMEHLTLPAALRAHSHKLFGLTIDPDRLTAIRNERKPNSRYSSYAQCEFEVREVENLFRRENIAHINSTHFSVEEISAKILVEKGVERRFK.

152–159 lines the ADP pocket; sequence GVSRCGKT.

This sequence belongs to the pyruvate, phosphate/water dikinase regulatory protein family. PSRP subfamily.

The catalysed reaction is [pyruvate, water dikinase] + ADP = [pyruvate, water dikinase]-phosphate + AMP + H(+). It carries out the reaction [pyruvate, water dikinase]-phosphate + phosphate + H(+) = [pyruvate, water dikinase] + diphosphate. In terms of biological role, bifunctional serine/threonine kinase and phosphorylase involved in the regulation of the phosphoenolpyruvate synthase (PEPS) by catalyzing its phosphorylation/dephosphorylation. The protein is Putative phosphoenolpyruvate synthase regulatory protein of Pseudomonas fluorescens (strain SBW25).